Consider the following 229-residue polypeptide: Potassium/proton antiporter CemA (229 aa).

Helical transmembrane passes span 7-27 (LTPF…SLSF), 106-126 (IVLH…YYFL), and 189-209 (IISG…KYWI).

It belongs to the CemA family.

The protein resides in the plastid. It is found in the chloroplast inner membrane. The catalysed reaction is K(+)(in) + H(+)(out) = K(+)(out) + H(+)(in). Contributes to K(+)/H(+) antiport activity by supporting proton efflux to control proton extrusion and homeostasis in chloroplasts in a light-dependent manner to modulate photosynthesis. Prevents excessive induction of non-photochemical quenching (NPQ) under continuous-light conditions. Indirectly promotes efficient inorganic carbon uptake into chloroplasts. The protein is Potassium/proton antiporter CemA of Calycanthus floridus var. glaucus (Eastern sweetshrub).